A 61-amino-acid polypeptide reads, in one-letter code: Small ribosomal subunit protein uS14 (61 aa).

Zn(2+) is bound by residues C24, C27, C40, and C43.

It belongs to the universal ribosomal protein uS14 family. Zinc-binding uS14 subfamily. In terms of assembly, part of the 30S ribosomal subunit. Contacts proteins S3 and S10. Requires Zn(2+) as cofactor.

Functionally, binds 16S rRNA, required for the assembly of 30S particles and may also be responsible for determining the conformation of the 16S rRNA at the A site. The chain is Small ribosomal subunit protein uS14 from Clostridium botulinum (strain Alaska E43 / Type E3).